Here is a 115-residue protein sequence, read N- to C-terminus: Large ribosomal subunit protein uL22c (115 aa).

The protein belongs to the universal ribosomal protein uL22 family. In terms of assembly, part of the 50S ribosomal subunit.

The protein resides in the plastid. Its subcellular location is the chloroplast. Functionally, this protein binds specifically to 23S rRNA. The globular domain of the protein is located near the polypeptide exit tunnel on the outside of the subunit, while an extended beta-hairpin is found that lines the wall of the exit tunnel in the center of the 70S ribosome. In Thalassiosira pseudonana (Marine diatom), this protein is Large ribosomal subunit protein uL22c (rpl22).